The chain runs to 312 residues: Serine/threonine-protein phosphatase PP1 isozyme 2 (312 aa).

Residue Ala-2 is modified to N-acetylalanine. The Mn(2+) site is built by Asp-70, His-72, Asp-98, and Asn-130. His-131 functions as the Proton donor in the catalytic mechanism. Mn(2+) is bound by residues His-179 and His-254.

Belongs to the PPP phosphatase family. PP-1 subfamily. In terms of assembly, interacts with SRK2D/SNRK2.2 and SRK2E/SNRK2.6. Mn(2+) is required as a cofactor.

The protein localises to the nucleus. Its subcellular location is the cytoplasm. It carries out the reaction O-phospho-L-seryl-[protein] + H2O = L-seryl-[protein] + phosphate. The enzyme catalyses O-phospho-L-threonyl-[protein] + H2O = L-threonyl-[protein] + phosphate. Its activity is regulated as follows. Phosphatase activity is strongly reduced by the protein phosphatase inhibitor 2 (I-2). Its function is as follows. Serine/threonine-protein phosphatase that possesses phosphatase activity toward para-nitrophenyl phosphate (pNPP) in vitro. The protein is Serine/threonine-protein phosphatase PP1 isozyme 2 of Arabidopsis thaliana (Mouse-ear cress).